The primary structure comprises 486 residues: Ribulose bisphosphate carboxylase large chain (486 aa).

The substrate site is built by Asn-126 and Thr-176. The Proton acceptor role is filled by Lys-178. Residue Lys-180 participates in substrate binding. Mg(2+) is bound by residues Lys-204, Asp-206, and Glu-207. Position 204 is an N6-carboxylysine (Lys-204). His-296 (proton acceptor) is an active-site residue. Substrate-binding residues include Arg-297, His-329, and Ser-381.

The protein belongs to the RuBisCO large chain family. Type I subfamily. Heterohexadecamer of 8 large chains and 8 small chains. The cofactor is Mg(2+).

The catalysed reaction is 2 (2R)-3-phosphoglycerate + 2 H(+) = D-ribulose 1,5-bisphosphate + CO2 + H2O. It carries out the reaction D-ribulose 1,5-bisphosphate + O2 = 2-phosphoglycolate + (2R)-3-phosphoglycerate + 2 H(+). In terms of biological role, ruBisCO catalyzes two reactions: the carboxylation of D-ribulose 1,5-bisphosphate, the primary event in carbon dioxide fixation, as well as the oxidative fragmentation of the pentose substrate. Both reactions occur simultaneously and in competition at the same active site. The sequence is that of Ribulose bisphosphate carboxylase large chain from Rhizobium meliloti (strain 1021) (Ensifer meliloti).